The primary structure comprises 176 residues: uncharacterized protein (176 aa).

The signal sequence occupies residues 1-20; that stretch reads MIKKISIILITLFIIQLTKS. Positions 26-46 are disordered; sequence NNNNNNNNNNNNNNNNNNNNN. The N-linked (GlcNAc...) asparagine glycan is linked to asparagine 120.

The protein belongs to the Dictyostelium gerABC family.

It is found in the secreted. This is an uncharacterized protein from Dictyostelium discoideum (Social amoeba).